Here is a 233-residue protein sequence, read N- to C-terminus: Purine nucleoside phosphorylase DeoD-type (233 aa).

Histidine 4 contacts a purine D-ribonucleoside. Phosphate-binding positions include glycine 20, arginine 24, arginine 43, and 87–90 (RIGT). A purine D-ribonucleoside contacts are provided by residues 179 to 181 (EME) and 203 to 204 (SD). Catalysis depends on aspartate 204, which acts as the Proton donor.

It belongs to the PNP/UDP phosphorylase family. Homohexamer; trimer of homodimers.

The enzyme catalyses a purine D-ribonucleoside + phosphate = a purine nucleobase + alpha-D-ribose 1-phosphate. It catalyses the reaction a purine 2'-deoxy-D-ribonucleoside + phosphate = a purine nucleobase + 2-deoxy-alpha-D-ribose 1-phosphate. In terms of biological role, catalyzes the reversible phosphorolytic breakdown of the N-glycosidic bond in the beta-(deoxy)ribonucleoside molecules, with the formation of the corresponding free purine bases and pentose-1-phosphate. This is Purine nucleoside phosphorylase DeoD-type from Helicobacter pylori (strain HPAG1).